A 502-amino-acid chain; its full sequence is Glycerol kinase (502 aa).

Residue threonine 14 coordinates ADP. ATP is bound by residues threonine 14, threonine 15, and serine 16. Residue threonine 14 coordinates sn-glycerol 3-phosphate. An ADP-binding site is contributed by arginine 18. Sn-glycerol 3-phosphate contacts are provided by arginine 84, glutamate 85, tyrosine 136, and aspartate 246. Glycerol-binding residues include arginine 84, glutamate 85, tyrosine 136, aspartate 246, and glutamine 247. ADP is bound by residues threonine 268 and glycine 311. ATP is bound by residues threonine 268, glycine 311, glutamine 315, and glycine 412. ADP is bound by residues glycine 412 and asparagine 416.

Belongs to the FGGY kinase family. Homotetramer and homodimer (in equilibrium). Heterodimer with EIIA-Glc. Binds 1 zinc ion per glycerol kinase EIIA-Glc dimer. The zinc ion is important for dimerization.

It catalyses the reaction glycerol + ATP = sn-glycerol 3-phosphate + ADP + H(+). It functions in the pathway polyol metabolism; glycerol degradation via glycerol kinase pathway; sn-glycerol 3-phosphate from glycerol: step 1/1. Activity of this regulatory enzyme is affected by several metabolites. Allosterically and non-competitively inhibited by fructose 1,6-bisphosphate (FBP) and unphosphorylated phosphocarrier protein EIIA-Glc (III-Glc), an integral component of the bacterial phosphotransferase (PTS) system. Its function is as follows. Key enzyme in the regulation of glycerol uptake and metabolism. Catalyzes the phosphorylation of glycerol to yield sn-glycerol 3-phosphate. This is Glycerol kinase from Enterobacter sp. (strain 638).